The following is a 467-amino-acid chain: tRNA-2-methylthio-N(6)-dimethylallyladenosine synthase (467 aa).

Residues methionine 1–alanine 20 are disordered. The region spanning arginine 23–glycine 143 is the MTTase N-terminal domain. Residues cysteine 32, cysteine 68, cysteine 106, cysteine 184, cysteine 188, and cysteine 191 each coordinate [4Fe-4S] cluster. The region spanning arginine 170–alanine 402 is the Radical SAM core domain. The 63-residue stretch at aspartate 405–alanine 467 folds into the TRAM domain.

Belongs to the methylthiotransferase family. MiaB subfamily. In terms of assembly, monomer. It depends on [4Fe-4S] cluster as a cofactor.

The protein localises to the cytoplasm. It catalyses the reaction N(6)-dimethylallyladenosine(37) in tRNA + (sulfur carrier)-SH + AH2 + 2 S-adenosyl-L-methionine = 2-methylsulfanyl-N(6)-dimethylallyladenosine(37) in tRNA + (sulfur carrier)-H + 5'-deoxyadenosine + L-methionine + A + S-adenosyl-L-homocysteine + 2 H(+). Its function is as follows. Catalyzes the methylthiolation of N6-(dimethylallyl)adenosine (i(6)A), leading to the formation of 2-methylthio-N6-(dimethylallyl)adenosine (ms(2)i(6)A) at position 37 in tRNAs that read codons beginning with uridine. The sequence is that of tRNA-2-methylthio-N(6)-dimethylallyladenosine synthase from Brucella canis (strain ATCC 23365 / NCTC 10854 / RM-666).